The sequence spans 57 residues: Large ribosomal subunit protein bL32A (57 aa).

Belongs to the bacterial ribosomal protein bL32 family.

The protein is Large ribosomal subunit protein bL32A (rpmF1) of Streptomyces coelicolor (strain ATCC BAA-471 / A3(2) / M145).